The chain runs to 159 residues: Ribosomal RNA large subunit methyltransferase H (159 aa).

Residues Leu76, Gly108, and 127–132 (FSKMTF) each bind S-adenosyl-L-methionine.

Belongs to the RNA methyltransferase RlmH family. In terms of assembly, homodimer.

Its subcellular location is the cytoplasm. The enzyme catalyses pseudouridine(1915) in 23S rRNA + S-adenosyl-L-methionine = N(3)-methylpseudouridine(1915) in 23S rRNA + S-adenosyl-L-homocysteine + H(+). Its function is as follows. Specifically methylates the pseudouridine at position 1915 (m3Psi1915) in 23S rRNA. In Geobacillus sp. (strain WCH70), this protein is Ribosomal RNA large subunit methyltransferase H.